The chain runs to 765 residues: ATP-dependent zinc metalloprotease FtsH (765 aa).

Topologically, residues 1-27 (MSNTSNFNERVTENAKPPKNVKSIIWK) are cytoplasmic. Residues 28–48 (TIGIIIVMAIIIGLILFYVLP) form a helical membrane-spanning segment. Topologically, residues 49-213 (RNTIANISNI…NVQLPNQSTA (165 aa)) are extracellular. Residues 214-234 (ILTQFLTSIIPFVILIVIYIV) form a helical membrane-spanning segment. Over 235-765 (IARRFSRTMG…EPTASTASSN (531 aa)) the chain is Cytoplasmic. An ATP-binding site is contributed by 314-321 (GPPGTGKT). Residue histidine 536 coordinates Zn(2+). Glutamate 537 is a catalytic residue. Zn(2+) contacts are provided by histidine 540 and aspartate 615. Residues 730–748 (KAAAEKEEQAEKAKLDHQS) are compositionally biased toward basic and acidic residues. Residues 730–765 (KAAAEKEEQAEKAKLDHQSDSAQPQEEPTASTASSN) are disordered. Residues 749–765 (DSAQPQEEPTASTASSN) show a composition bias toward polar residues.

The protein in the central section; belongs to the AAA ATPase family. This sequence in the C-terminal section; belongs to the peptidase M41 family. Homohexamer. The cofactor is Zn(2+).

The protein localises to the cell membrane. Its function is as follows. Acts as a processive, ATP-dependent zinc metallopeptidase for both cytoplasmic and membrane proteins. Plays a role in the quality control of integral membrane proteins. The chain is ATP-dependent zinc metalloprotease FtsH from Mycoplasmoides gallisepticum (strain R(high / passage 156)) (Mycoplasma gallisepticum).